Reading from the N-terminus, the 342-residue chain is Dihydroorotase (342 aa).

Zn(2+) is bound by residues H13 and H15. Substrate is bound by residues 15–17 (HLR) and N41. K98, H135, and H173 together coordinate Zn(2+). An N6-carboxylysine modification is found at K98. Substrate is bound at residue H135. L218 provides a ligand contact to substrate. Zn(2+) is bound at residue D246. The active site involves D246. Substrate contacts are provided by H250 and A262.

It belongs to the metallo-dependent hydrolases superfamily. DHOase family. Class II DHOase subfamily. In terms of assembly, homodimer. Requires Zn(2+) as cofactor.

The catalysed reaction is (S)-dihydroorotate + H2O = N-carbamoyl-L-aspartate + H(+). The protein operates within pyrimidine metabolism; UMP biosynthesis via de novo pathway; (S)-dihydroorotate from bicarbonate: step 3/3. Its function is as follows. Catalyzes the reversible cyclization of carbamoyl aspartate to dihydroorotate. This chain is Dihydroorotase, found in Aliivibrio fischeri (strain ATCC 700601 / ES114) (Vibrio fischeri).